Reading from the N-terminus, the 171-residue chain is Ribosome maturation factor RimM (171 aa).

The PRC barrel domain occupies Asp93–Leu167.

The protein belongs to the RimM family. As to quaternary structure, binds ribosomal protein uS19.

The protein localises to the cytoplasm. Its function is as follows. An accessory protein needed during the final step in the assembly of 30S ribosomal subunit, possibly for assembly of the head region. Essential for efficient processing of 16S rRNA. May be needed both before and after RbfA during the maturation of 16S rRNA. It has affinity for free ribosomal 30S subunits but not for 70S ribosomes. This chain is Ribosome maturation factor RimM, found in Lactobacillus helveticus (strain DPC 4571).